Here is a 160-residue protein sequence, read N- to C-terminus: 6,7-dimethyl-8-ribityllumazine synthase (160 aa).

Residues Phe-28, 62–64 (ALE), and 86–88 (AVI) each bind 5-amino-6-(D-ribitylamino)uracil. Position 91-92 (91-92 (ET)) interacts with (2S)-2-hydroxy-3-oxobutyl phosphate. His-94 functions as the Proton donor in the catalytic mechanism. Asn-119 contacts 5-amino-6-(D-ribitylamino)uracil. Arg-133 is a (2S)-2-hydroxy-3-oxobutyl phosphate binding site.

The protein belongs to the DMRL synthase family.

The enzyme catalyses (2S)-2-hydroxy-3-oxobutyl phosphate + 5-amino-6-(D-ribitylamino)uracil = 6,7-dimethyl-8-(1-D-ribityl)lumazine + phosphate + 2 H2O + H(+). The protein operates within cofactor biosynthesis; riboflavin biosynthesis; riboflavin from 2-hydroxy-3-oxobutyl phosphate and 5-amino-6-(D-ribitylamino)uracil: step 1/2. Functionally, catalyzes the formation of 6,7-dimethyl-8-ribityllumazine by condensation of 5-amino-6-(D-ribitylamino)uracil with 3,4-dihydroxy-2-butanone 4-phosphate. This is the penultimate step in the biosynthesis of riboflavin. The chain is 6,7-dimethyl-8-ribityllumazine synthase from Nitrosospira multiformis (strain ATCC 25196 / NCIMB 11849 / C 71).